The sequence spans 218 residues: Histone H1 (218 aa).

Composition is skewed to low complexity over residues 1–19 (MSET…GAKA) and 27–39 (AAGG…PAGP). 2 disordered regions span residues 1 to 41 (MSET…GPSV) and 89 to 218 (VGKG…PKKK). Serine 2 is subject to N-acetylserine. The H15 domain occupies 37–110 (AGPSVTELIT…GASGSFKLNK (74 aa)). Composition is skewed to basic residues over residues 119–133 (ATKK…KPAA), 141–158 (KKPK…KAKK), 166–184 (KAAK…KKAA), and 191–218 (KAVK…PKKK).

The protein belongs to the histone H1/H5 family.

Its subcellular location is the nucleus. The protein resides in the chromosome. Histones H1 are necessary for the condensation of nucleosome chains into higher-order structures. This Anas platyrhynchos (Mallard) protein is Histone H1.